The sequence spans 359 residues: MANVLVAMSGGVDSSLAAALLLEAGHQVTGVTMHLWDDDEQGLRESLCCAAEAAASARRVCALLGIPFYVFNYQREFRRHVIDYFIRAYTHGLTPNPCVECNRMIKFRALLDRARTLGFDAVATGHYARIIQGEDGRYQLWRAVDLEKDQSYMLHMLGQAELSRLIFPIGAYTKREVREMAAARGLPSADREESQDICFVPDGDYRNLLRIESPESLVPGPIVDLEGREIGRHRGLPLYTVGQRRGLGLGGGEPRYVVAIDPARNALIVGPAAALNRARFTVIDACWVDDAPPAESFTCLVQVRAHAEPLPARVSQQPDGRWLVELERPQRAVSPGQAAVFYRGQQVLGGGWIARPEVA.

ATP contacts are provided by residues 7–14 (AMSGGVDS) and M33. C101 serves as the catalytic Nucleophile. C101 and C198 are disulfide-bonded. Residue G125 participates in ATP binding. Residues 148 to 150 (KDQ) are interaction with tRNA. The Cysteine persulfide intermediate role is filled by C198.

This sequence belongs to the MnmA/TRMU family.

The protein resides in the cytoplasm. The enzyme catalyses S-sulfanyl-L-cysteinyl-[protein] + uridine(34) in tRNA + AH2 + ATP = 2-thiouridine(34) in tRNA + L-cysteinyl-[protein] + A + AMP + diphosphate + H(+). In terms of biological role, catalyzes the 2-thiolation of uridine at the wobble position (U34) of tRNA, leading to the formation of s(2)U34. This is tRNA-specific 2-thiouridylase MnmA from Chloroflexus aurantiacus (strain ATCC 29366 / DSM 635 / J-10-fl).